A 179-amino-acid chain; its full sequence is IMPACT family member in pol 5'region (179 aa).

This sequence belongs to the IMPACT family.

The chain is IMPACT family member in pol 5'region from Thermus thermophilus.